The sequence spans 269 residues: Regulatory protein RecX (269 aa).

Belongs to the RecX family.

Its subcellular location is the cytoplasm. In terms of biological role, modulates RecA activity. The chain is Regulatory protein RecX from Listeria monocytogenes serotype 4b (strain F2365).